The following is a 76-amino-acid chain: uncharacterized protein (76 aa).

This is an uncharacterized protein from Archaeoglobus fulgidus (strain ATCC 49558 / DSM 4304 / JCM 9628 / NBRC 100126 / VC-16).